Here is a 477-residue protein sequence, read N- to C-terminus: MVRVRLAPSPTGTLHIGTARTAVFNWLYARRQQGSFLLRIEDTDKERSKPEYTQNILEGLRWLGIDWDEEPLIQSEQVQQHRAAIETLLQKGLAYRCYANEAELDAMREAQKASNQAPRYDNRHRNLTPEQEAAFQSEGREAVIRFRIDDNAEIRWNDMVRGAMSWRGADLGGDMVVARRAPADQIGDPLYNLVVVVDDAAMAISHVIRGEDHIANTAKQLLLYEALDLPAPTFAHAPLILNAEGRKLSKRDGVTSINDFRTMGYTAEAIANYMTLLGWSVPEGMEERFTLPEAAAVFSFDRVNKAGARFDWDKLNWLNGQVLHALPAQQLLDDLRPLWAEQGWTLPDDSSWGLELCELLGPSLTLLKEGVEQATPFFKCPDLEDDGVRQLEADGARTAVAQLLQILEAEPWDGKDTDRAKQLLADAAKGAGVKKGVVMKSLRAALLGRLQGPDLITTWCLLARIGEDLPRLQRCLA.

Positions 8 to 18 (PSPTGTLHIGT) match the 'HIGH' region motif. A 'KMSKS' region motif is present at residues 247 to 251 (KLSKR). K250 is a binding site for ATP.

This sequence belongs to the class-I aminoacyl-tRNA synthetase family. Glutamate--tRNA ligase type 1 subfamily. Monomer.

Its subcellular location is the cytoplasm. The enzyme catalyses tRNA(Glu) + L-glutamate + ATP = L-glutamyl-tRNA(Glu) + AMP + diphosphate. Its function is as follows. Catalyzes the attachment of glutamate to tRNA(Glu) in a two-step reaction: glutamate is first activated by ATP to form Glu-AMP and then transferred to the acceptor end of tRNA(Glu). The polypeptide is Glutamate--tRNA ligase (Parasynechococcus marenigrum (strain WH8102)).